Here is a 204-residue protein sequence, read N- to C-terminus: High frequency lysogenization protein HflD homolog (204 aa).

The protein belongs to the HflD family.

Its subcellular location is the cytoplasm. It is found in the cell inner membrane. The sequence is that of High frequency lysogenization protein HflD homolog from Stenotrophomonas maltophilia (strain R551-3).